A 485-amino-acid polypeptide reads, in one-letter code: Isocitrate dehydrogenase [NADP], chloroplastic/mitochondrial (485 aa).

The N-terminal 65 residues, 1-65 (MLNKLTHGVF…VQFHRASAVR (65 aa)), are a transit peptide targeting the chloroplast and mitochondrion. Residues 147 to 149 (TIT) and arginine 154 contribute to the NADP(+) site. Substrate is bound at residue threonine 149. Substrate is bound by residues 166 to 172 (SPNGTIR), arginine 181, and arginine 204. Residue aspartate 323 participates in Mn(2+) binding. NADP(+) is bound at residue lysine 331. Aspartate 346 provides a ligand contact to Mn(2+). NADP(+) is bound by residues 381–386 (GTVTRH) and asparagine 399.

The protein belongs to the isocitrate and isopropylmalate dehydrogenases family. It depends on Mg(2+) as a cofactor. Requires Mn(2+) as cofactor.

The protein localises to the plastid. The protein resides in the chloroplast. It localises to the mitochondrion. It carries out the reaction D-threo-isocitrate + NADP(+) = 2-oxoglutarate + CO2 + NADPH. In terms of biological role, may be involved in response to oxidative stresses. In Arabidopsis thaliana (Mouse-ear cress), this protein is Isocitrate dehydrogenase [NADP], chloroplastic/mitochondrial.